Here is a 188-residue protein sequence, read N- to C-terminus: dCTP deaminase (188 aa).

Residues 111-116 (KSTYAR), 135-137 (TLE), Gln156, Tyr170, and Gln180 each bind dCTP. The Proton donor/acceptor role is filled by Glu137.

Belongs to the dCTP deaminase family. As to quaternary structure, homotrimer.

The enzyme catalyses dCTP + H2O + H(+) = dUTP + NH4(+). It functions in the pathway pyrimidine metabolism; dUMP biosynthesis; dUMP from dCTP (dUTP route): step 1/2. Its function is as follows. Catalyzes the deamination of dCTP to dUTP. The protein is dCTP deaminase of Pseudomonas aeruginosa (strain UCBPP-PA14).